A 309-amino-acid polypeptide reads, in one-letter code: tRNA pseudouridine synthase B (309 aa).

Asp52 (nucleophile) is an active-site residue.

It belongs to the pseudouridine synthase TruB family. Type 1 subfamily.

It catalyses the reaction uridine(55) in tRNA = pseudouridine(55) in tRNA. In terms of biological role, responsible for synthesis of pseudouridine from uracil-55 in the psi GC loop of transfer RNAs. This chain is tRNA pseudouridine synthase B, found in Leptospira interrogans serogroup Icterohaemorrhagiae serovar Lai (strain 56601).